The primary structure comprises 170 residues: uncharacterized protein (170 aa).

The helical transmembrane segment at 96–116 threads the bilayer; that stretch reads FSAISIGSFPIVLFLSLFFFD.

The protein localises to the membrane. This is an uncharacterized protein from Borreliella burgdorferi (strain ATCC 35210 / DSM 4680 / CIP 102532 / B31) (Borrelia burgdorferi).